A 163-amino-acid chain; its full sequence is Augmin complex subunit wac (163 aa).

Residues 86–115 (ELQRILSSIEEATRDVVMLERFNAAAEERL) are a coiled coil.

As to quaternary structure, component of the augmin complex composed of dgt2, dgt3, dgt4, dgt5, dgt6, msd1, msd5 and wac. The complex interacts directly or indirectly with microtubules and is required for centrosome-independent generation of spindle microtubules. wac interacts directly (via coiled coil) with dgt2. As to expression, in adult females, detected only in the abdomen with no expression in the head or thorax (at protein level).

Its subcellular location is the cytoplasm. It localises to the cytoskeleton. It is found in the spindle. The protein localises to the spindle pole. Functionally, as part of the augmin complex, plays a role in centrosome-independent generation of spindle microtubules. The complex is required for mitotic spindle assembly through its involvement in localizing gamma-tubulin to spindle microtubules. wac is dispensable for somatic mitosis and for assembly of spindle microtubules in oocytes during female meiosis but is required during female meiosis for chromosome alignment and segregation. It is required for microtubule assembly near spindle poles in oocytes. It is also required for acentrosomal microtubule nucleation and meiotic spindle formation during male meiosis. wac binds to microtubules in vitro. The chain is Augmin complex subunit wac from Drosophila melanogaster (Fruit fly).